A 168-amino-acid chain; its full sequence is Cell division inhibitor SulA (168 aa).

A ftsZ binding region spans residues 106 to 112 (ALQTGNY). Residues 161–168 (KIHSSLYH) are lon protease binding.

This sequence belongs to the SulA family. In terms of assembly, interacts with FtsZ. Is rapidly cleaved and degraded by the Lon protease once DNA damage is repaired.

Its function is as follows. Component of the SOS system and an inhibitor of cell division. Accumulation of SulA causes rapid cessation of cell division and the appearance of long, non-septate filaments. In the presence of GTP, binds a polymerization-competent form of FtsZ in a 1:1 ratio, thus inhibiting FtsZ polymerization and therefore preventing it from participating in the assembly of the Z ring. This mechanism prevents the premature segregation of damaged DNA to daughter cells during cell division. The protein is Cell division inhibitor SulA of Serratia marcescens.